A 437-amino-acid polypeptide reads, in one-letter code: Phosphoribosylamine--glycine ligase (437 aa).

The 213-residue stretch at 110–322 (KNLLRSADIP…LVEVMQAVVD (213 aa)) folds into the ATP-grasp domain. 142-203 (EPTDPVNVVV…EERLTGPEVS (62 aa)) is a binding site for ATP. Glu292 and Asn294 together coordinate Mg(2+).

This sequence belongs to the GARS family. Mg(2+) serves as cofactor. Requires Mn(2+) as cofactor.

The enzyme catalyses 5-phospho-beta-D-ribosylamine + glycine + ATP = N(1)-(5-phospho-beta-D-ribosyl)glycinamide + ADP + phosphate + H(+). It participates in purine metabolism; IMP biosynthesis via de novo pathway; N(1)-(5-phospho-D-ribosyl)glycinamide from 5-phospho-alpha-D-ribose 1-diphosphate: step 2/2. This is Phosphoribosylamine--glycine ligase from Rhodopirellula baltica (strain DSM 10527 / NCIMB 13988 / SH1).